Here is a 190-residue protein sequence, read N- to C-terminus: Protein GrpE (190 aa).

Polar residues predominate over residues 1 to 31 (MTETPNTSSEEIQTSEPSSDNELQTLQQENA). Residues 1 to 34 (MTETPNTSSEEIQTSEPSSDNELQTLQQENANLK) form a disordered region.

This sequence belongs to the GrpE family. As to quaternary structure, homodimer.

It localises to the cytoplasm. Its function is as follows. Participates actively in the response to hyperosmotic and heat shock by preventing the aggregation of stress-denatured proteins, in association with DnaK and GrpE. It is the nucleotide exchange factor for DnaK and may function as a thermosensor. Unfolded proteins bind initially to DnaJ; upon interaction with the DnaJ-bound protein, DnaK hydrolyzes its bound ATP, resulting in the formation of a stable complex. GrpE releases ADP from DnaK; ATP binding to DnaK triggers the release of the substrate protein, thus completing the reaction cycle. Several rounds of ATP-dependent interactions between DnaJ, DnaK and GrpE are required for fully efficient folding. The chain is Protein GrpE from Chlamydia muridarum (strain MoPn / Nigg).